Consider the following 119-residue polypeptide: Phytosulfokines 2 (119 aa).

Residues 1-34 (MSTTRGVSSSSAAAALALLLLFALCFFSFHSAAA) form the signal peptide. The propeptide occupies 35–109 (ARAVPRDEHQ…RRLLSDAHLD (75 aa)). Sulfotyrosine occurs at positions 110 and 112. A propeptide spanning residues 115–119 (HKNKP) is cleaved from the precursor.

It belongs to the phytosulfokine family. In terms of processing, sulfation is important for activity and for the binding to a putative membrane receptor. PSK-alpha is produced by endopeptidase digestion. PSK-beta is produced from PSK-alpha by exopeptidase digestion.

The protein localises to the secreted. In terms of biological role, promotes plant cell differentiation, organogenesis and somatic embryogenesis as well as cell proliferation. The chain is Phytosulfokines 2 (PSK2) from Oryza sativa subsp. indica (Rice).